The sequence spans 177 residues: Adenine phosphoribosyltransferase (177 aa).

The protein belongs to the purine/pyrimidine phosphoribosyltransferase family. As to quaternary structure, homodimer.

It is found in the cytoplasm. The catalysed reaction is AMP + diphosphate = 5-phospho-alpha-D-ribose 1-diphosphate + adenine. It participates in purine metabolism; AMP biosynthesis via salvage pathway; AMP from adenine: step 1/1. Catalyzes a salvage reaction resulting in the formation of AMP, that is energically less costly than de novo synthesis. The chain is Adenine phosphoribosyltransferase from Chlorobium phaeobacteroides (strain BS1).